Consider the following 81-residue polypeptide: uncharacterized protein (81 aa).

This is an uncharacterized protein from Synechocystis sp. (strain ATCC 27184 / PCC 6803 / Kazusa).